The primary structure comprises 133 residues: Profilin Sal k 4.0301 (133 aa).

A disulfide bond links C95 and C117.

It belongs to the profilin family. As to quaternary structure, occurs in many kinds of cells as a complex with monomeric actin in a 1:1 ratio. As to expression, expressed in pollen (at protein and mRNA level).

It is found in the cytoplasm. The protein resides in the cytoskeleton. Its function is as follows. Binds to actin and affects the structure of the cytoskeleton. At high concentrations, profilin prevents the polymerization of actin, whereas it enhances it at low concentrations. In Kali turgidum (Prickly saltwort), this protein is Profilin Sal k 4.0301.